We begin with the raw amino-acid sequence, 177 residues long: Large ribosomal subunit protein uL6 (177 aa).

It belongs to the universal ribosomal protein uL6 family. In terms of assembly, part of the 50S ribosomal subunit.

Its function is as follows. This protein binds to the 23S rRNA, and is important in its secondary structure. It is located near the subunit interface in the base of the L7/L12 stalk, and near the tRNA binding site of the peptidyltransferase center. In Cronobacter sakazakii (strain ATCC BAA-894) (Enterobacter sakazakii), this protein is Large ribosomal subunit protein uL6.